Consider the following 372-residue polypeptide: Cytochrome b (372 aa).

4 helical membrane passes run L32–W52, F77–I99, V114–T134, and L180–F200. The heme b site is built by H83 and H97. Positions 184 and 198 each coordinate heme b. Residue H203 participates in a ubiquinone binding. The next 4 membrane-spanning stretches (helical) occupy residues Y228 to C248, L297 to I317, L330 to F350, and P351 to L371.

The protein belongs to the cytochrome b family. The main subunits of complex b-c1 are: cytochrome b, cytochrome c1 and the Rieske protein. Heme b serves as cofactor.

The protein localises to the mitochondrion inner membrane. Its function is as follows. Component of the ubiquinol-cytochrome c reductase complex (complex III or cytochrome b-c1 complex) that is part of the mitochondrial respiratory chain. The b-c1 complex mediates electron transfer from ubiquinol to cytochrome c. Contributes to the generation of a proton gradient across the mitochondrial membrane that is then used for ATP synthesis. The polypeptide is Cytochrome b (MT-CYB) (Trypanoplasma borreli).